Consider the following 189-residue polypeptide: Large ribosomal subunit protein uL5 (189 aa).

It belongs to the universal ribosomal protein uL5 family. In terms of assembly, part of the 50S ribosomal subunit; part of the 5S rRNA/L5/L18/L25 subcomplex. Contacts the 5S rRNA and the P site tRNA. Forms a bridge to the 30S subunit in the 70S ribosome.

This is one of the proteins that bind and probably mediate the attachment of the 5S RNA into the large ribosomal subunit, where it forms part of the central protuberance. In the 70S ribosome it contacts protein S13 of the 30S subunit (bridge B1b), connecting the 2 subunits; this bridge is implicated in subunit movement. Contacts the P site tRNA; the 5S rRNA and some of its associated proteins might help stabilize positioning of ribosome-bound tRNAs. This is Large ribosomal subunit protein uL5 from Kocuria rhizophila (strain ATCC 9341 / DSM 348 / NBRC 103217 / DC2201).